A 459-amino-acid polypeptide reads, in one-letter code: Neuronal acetylcholine receptor subunit beta-2 (459 aa).

The Extracellular portion of the chain corresponds to leucine 1 to lysine 203. N-linked (GlcNAc...) asparagine glycosylation is found at asparagine 21 and asparagine 138. Cysteines 125 and 139 form a disulfide. The chain crosses the membrane as a helical span at residues proline 204 to leucine 228. Topologically, residues proline 229–lysine 235 are cytoplasmic. The helical transmembrane segment at valine 236–serine 254 threads the bilayer. Residues lysine 255–lysine 269 lie on the Extracellular side of the membrane. A helical membrane pass occupies residues tyrosine 270–valine 291. The Cytoplasmic portion of the chain corresponds to histidine 292–arginine 421. The chain crosses the membrane as a helical span at residues leucine 422 to valine 440.

This sequence belongs to the ligand-gated ion channel (TC 1.A.9) family. Acetylcholine receptor (TC 1.A.9.1) subfamily. Beta-2/CHRNB2 sub-subfamily. In terms of assembly, neuronal AChR is a heteropentamer composed of two different types of subunits: alpha and beta. CHRNB2/Beta-2 subunit can be combined to CHRNA2/alpha-2, CHRNA3/alpha-3 or CHRNA4/alpha-4, CHRNA5/alpha-5, CHRNA6/alpha-6 and CHRNB3/beta-3 to give rise to functional receptors.

The protein localises to the synaptic cell membrane. It is found in the cell membrane. It carries out the reaction Ca(2+)(in) = Ca(2+)(out). The catalysed reaction is K(+)(in) = K(+)(out). It catalyses the reaction Na(+)(in) = Na(+)(out). With respect to regulation, activated by a myriad of ligands such as acetylcholine, cytisine, nicotine, choline and epibatidine. nAChR activity is inhibited by the antagonist alpha-conotoxins BuIA, PnIA, PnIC, GID and MII, small disulfide-constrained peptides from cone snails. In terms of biological role, component of neuronal acetylcholine receptors (nAChRs) that function as pentameric, ligand-gated cation channels with high calcium permeability among other activities. nAChRs are excitatory neurotrasnmitter receptors formed by a collection of nAChR subunits known to mediate synaptic transmission in the nervous system and the neuromuscular junction. Each nAchR subunit confers differential attributes to channel properties, including activation, deactivation and desensitization kinetics, pH sensitivity, cation permeability, and binding to allosteric modulators. CHRNB2 forms heteropentameric neuronal acetylcholine receptors with CHRNA2, CHRNA3, CHRNA4 and CHRNA6, as well as CHRNA5 and CHRNB3 as accesory subunits. The sequence is that of Neuronal acetylcholine receptor subunit beta-2 (chrnb2) from Carassius auratus (Goldfish).